A 134-amino-acid polypeptide reads, in one-letter code: Small ribosomal subunit protein uS8c (134 aa).

It belongs to the universal ribosomal protein uS8 family. As to quaternary structure, part of the 30S ribosomal subunit.

The protein localises to the plastid. The protein resides in the chloroplast. In terms of biological role, one of the primary rRNA binding proteins, it binds directly to 16S rRNA central domain where it helps coordinate assembly of the platform of the 30S subunit. The chain is Small ribosomal subunit protein uS8c (rps8) from Gossypium barbadense (Sea Island cotton).